We begin with the raw amino-acid sequence, 57 residues long: Cold shock protein CspB (57 aa).

A CSD domain is found at 1 to 57 (IKWFNSEKGFGFIEVEGQDDVFVHFSAIQGEGFKCLEEGQAVSFEIVEGNRGPQAAN).

In terms of assembly, homodimer.

It is found in the cytoplasm. Affects cell viability at low temperatures. In Sporosarcina globispora (Bacillus globisporus), this protein is Cold shock protein CspB (cspB).